The sequence spans 264 residues: S-adenosylmethionine decarboxylase proenzyme (264 aa).

S112 acts as the Schiff-base intermediate with substrate; via pyruvic acid in catalysis. The residue at position 112 (S112) is a Pyruvic acid (Ser); by autocatalysis. H117 functions as the Proton acceptor; for processing activity in the catalytic mechanism. C140 acts as the Proton donor; for catalytic activity in catalysis.

The protein belongs to the prokaryotic AdoMetDC family. Type 2 subfamily. In terms of assembly, heterooctamer of four alpha and four beta chains arranged as a tetramer of alpha/beta heterodimers. Pyruvate serves as cofactor. In terms of processing, is synthesized initially as an inactive proenzyme. Formation of the active enzyme involves a self-maturation process in which the active site pyruvoyl group is generated from an internal serine residue via an autocatalytic post-translational modification. Two non-identical subunits are generated from the proenzyme in this reaction, and the pyruvate is formed at the N-terminus of the alpha chain, which is derived from the carboxyl end of the proenzyme. The post-translation cleavage follows an unusual pathway, termed non-hydrolytic serinolysis, in which the side chain hydroxyl group of the serine supplies its oxygen atom to form the C-terminus of the beta chain, while the remainder of the serine residue undergoes an oxidative deamination to produce ammonia and the pyruvoyl group blocking the N-terminus of the alpha chain.

It carries out the reaction S-adenosyl-L-methionine + H(+) = S-adenosyl 3-(methylsulfanyl)propylamine + CO2. Its pathway is amine and polyamine biosynthesis; S-adenosylmethioninamine biosynthesis; S-adenosylmethioninamine from S-adenosyl-L-methionine: step 1/1. Functionally, catalyzes the decarboxylation of S-adenosylmethionine to S-adenosylmethioninamine (dcAdoMet), the propylamine donor required for the synthesis of the polyamines spermine and spermidine from the diamine putrescine. In Hamiltonella defensa subsp. Acyrthosiphon pisum (strain 5AT), this protein is S-adenosylmethionine decarboxylase proenzyme.